The sequence spans 209 residues: Translation initiation factor IF-3 (209 aa).

The protein belongs to the IF-3 family. In terms of assembly, monomer.

It localises to the cytoplasm. Its function is as follows. IF-3 binds to the 30S ribosomal subunit and shifts the equilibrium between 70S ribosomes and their 50S and 30S subunits in favor of the free subunits, thus enhancing the availability of 30S subunits on which protein synthesis initiation begins. The polypeptide is Translation initiation factor IF-3 (Chlorobium phaeobacteroides (strain DSM 266 / SMG 266 / 2430)).